Here is a 364-residue protein sequence, read N- to C-terminus: Alpha-2-HS-glycoprotein (364 aa).

A signal peptide (or 17) is located at residues 1–15 (MKSFLLLFCLAQLCS). In terms of domain architecture, Cystatin fetuin-A-type 1 spans 27-133 (YKEPACDDPD…QFSVLFTKCD (107 aa)). Intrachain disulfides connect C32–C355, C89–C100, C114–C132, C146–C149, C208–C219, and C230–C248. A glycan (N-linked (GlcNAc...) asparagine) is linked at N99. Residues S134, S135, and S138 each carry the phosphoserine modification. The Cystatin fetuin-A-type 2 domain occupies 144–256 (KLCPDCPLLA…TCTLFQTQPV (113 aa)). 2 N-linked (GlcNAc...) asparagine glycosylation sites follow: N156 and N176. An O-linked (GalNAc...) serine glycan is attached at S301. A Phosphothreonine modification is found at T319. Residues S321, S325, S328, and S330 each carry the phosphoserine modification. The O-linked (GalNAc...) threonine glycan is linked to T339.

It belongs to the fetuin family. Post-translationally, phosphorylated by FAM20C in the extracellular medium.

Its subcellular location is the secreted. This Ovis aries (Sheep) protein is Alpha-2-HS-glycoprotein (AHSG).